A 453-amino-acid chain; its full sequence is DNA repair protein RadA (453 aa).

A C4-type zinc finger spans residues C10 to C27. An ATP-binding site is contributed by G95–S102. A RadA KNRFG motif motif is present at residues K251–G255. The segment at D350–S453 is lon-protease-like.

This sequence belongs to the RecA family. RadA subfamily.

DNA-dependent ATPase involved in processing of recombination intermediates, plays a role in repairing DNA breaks. Stimulates the branch migration of RecA-mediated strand transfer reactions, allowing the 3' invading strand to extend heteroduplex DNA faster. Binds ssDNA in the presence of ADP but not other nucleotides, has ATPase activity that is stimulated by ssDNA and various branched DNA structures, but inhibited by SSB. Does not have RecA's homology-searching function. In Streptococcus pyogenes serotype M3 (strain ATCC BAA-595 / MGAS315), this protein is DNA repair protein RadA.